The primary structure comprises 330 residues: Polyprenyl transferase dpfgC (330 aa).

N34 carries an N-linked (GlcNAc...) asparagine glycan. Helical transmembrane passes span 105–125, 146–166, 175–192, 199–219, 237–257, 273–293, and 310–330; these read ALCV…NDWI, VTTT…WGVL, VLKH…YPFG, KLMI…AIPG, CLPL…AYSY, NIAG…IILA, and NFIL…LTSA.

The protein belongs to the UbiA prenyltransferase family. Mg(2+) serves as cofactor.

Its subcellular location is the membrane. It participates in secondary metabolite biosynthesis; terpenoid biosynthesis. Polyprenyl transferase; part of the gene cluster that mediates the biosynthesis of diterpenoid pyrones. The first step of the pathway is the synthesis of the alpha-pyrone moiety by the polyketide synthase dpfgA via condensation of one acetyl-CoA starter unit with 3 malonyl-CoA units and 2 methylations. The alpha-pyrone is then combined with geranylgeranyl pyrophosphate (GGPP) formed by the GGPP synthase dpfgD through the action of the prenyltransferase dpfgC to yield a linear alpha-pyrone diterpenoid. Subsequent steps in the diterpenoid pyrone biosynthetic pathway involve the decalin core formation, which is initiated by the epoxidation of the C10-C11 olefin by the FAD-dependent oxidoreductase dpfgE, and is followed by a cyclization cascade catalyzed by the terpene cyclase dpfgB. The short chain dehydrogenase/reductase dpfgG then oxidizes the 8S hydroxy group to a ketone and the short chain dehydrogenase/reductase dpfgH reduces the ketone to the 8R hydroxy group to yield higginsianin B. Higginsianin B is further methylated by the methyltransferase dpfgI to produce the intermediate named FDDP B. The cytochrome P450 monooxygenase dfgpJ then catalyzes a three-step oxidation at C-27 to generate a carboxylic acid as well as C-26 hydroxylation. Finally, methyltransferase dpfgK methylates the carboxylic acid generated by dpfgJ, yielding the final diterpenoid pyrones from the pathway which were named FDDP D and FDDP E. The sequence is that of Polyprenyl transferase dpfgC from Gibberella zeae (strain ATCC MYA-4620 / CBS 123657 / FGSC 9075 / NRRL 31084 / PH-1) (Wheat head blight fungus).